We begin with the raw amino-acid sequence, 293 residues long: Undecaprenyl-diphosphatase (293 aa).

6 consecutive transmembrane segments (helical) span residues 74–94 (VLVF…AGVF), 107–127 (WMII…KDLI), 134–154 (MWIT…AEKM), 209–229 (FLLA…DAFA), 243–263 (VGTL…MKFV), and 271–291 (FAAY…LGML).

The protein belongs to the UppP family.

It is found in the cell membrane. It carries out the reaction di-trans,octa-cis-undecaprenyl diphosphate + H2O = di-trans,octa-cis-undecaprenyl phosphate + phosphate + H(+). Catalyzes the dephosphorylation of undecaprenyl diphosphate (UPP). Confers resistance to bacitracin. This Corynebacterium glutamicum (strain ATCC 13032 / DSM 20300 / JCM 1318 / BCRC 11384 / CCUG 27702 / LMG 3730 / NBRC 12168 / NCIMB 10025 / NRRL B-2784 / 534) protein is Undecaprenyl-diphosphatase.